Here is a 608-residue protein sequence, read N- to C-terminus: FAD-binding monooxygenase ktnD (608 aa).

An N-linked (GlcNAc...) asparagine glycan is attached at Asn-4. The helical transmembrane segment at 17 to 37 threads the bilayer; it reads ATVVIIGAGVSGMCMAIDLLH. FAD contacts are provided by residues 56–59, 68–69, and Tyr-74; these read TWAN and DV. 66 to 68 provides a ligand contact to NADP(+); it reads ASD. Residue Asn-114 is glycosylated (N-linked (GlcNAc...) asparagine). Residues 201 to 207 and 224 to 225 each bind NADP(+); these read NGASAIQ and RS. The N-linked (GlcNAc...) asparagine glycan is linked to Asn-325. Residues 535 to 555 form a helical membrane-spanning segment; it reads ALVSNVTLFLGVALAAGGVYW.

Belongs to the FAD-binding monooxygenase family. FAD serves as cofactor.

Its subcellular location is the membrane. Functionally, non-reducing polyketide synthase; part of the gene cluster that mediates the biosynthesis of the bicoumarin kotanin. The non-reducing polyketide synthase ktnS first catalyzes the formation of the pentaketidic 4,7-dihydroxy-5-methylcoumarin from acetyl coenzyme A and 4 malonyl coenzyme A molecules. Further O-methylation by ktnB leads to the formation of 7-demethylsiderin. Then, an oxidative phenol coupling catalyzed by the cytochrome P450 monooxygenase ktnC forms the 8,8'-dimer P-orlandin via dimerization the monomeric precursor, 7-demethylsiderin. P-orlandin is subsequently O-methylated in a stepwise fashion to demethylkotanin and kotanin. The function of ktnD within the pathway has not been determined yet. This is FAD-binding monooxygenase ktnD from Aspergillus niger (strain ATCC MYA-4892 / CBS 513.88 / FGSC A1513).